A 334-amino-acid chain; its full sequence is MMLAVEDVLSELAGEERNERGLPPGFRFHPTDEELITFYLASKIFHGGLSGIHISEVDLNRCEPWELPEMAKMGEREWYFYSLRDRKYPTGLRTNRATTAGYWKATGKDKEVFSGGGGQLVGMKKTLVFYKGRAPRGLKTKWVMHEYRLENDHSHRHTCKEEWVICRVFNKTGDRKNVGLIHNQISYLHNHSLSTTHHHHHEALPLLIEPSNKTLTNFPSLLYDDPHQNYNNNNFLHGSSGHNIDELKALINPVVSQLNGIIFPSGNNNNDEDDFDFNLGVKTEQSSNGNEIDVRDYLENPLFQEASYGLLGFSSSPGPLHMLLDSPCPLGFQL.

In terms of domain architecture, NAC spans 22–171 (LPPGFRFHPT…EWVICRVFNK (150 aa)). A DNA-binding region spans residues 121 to 177 (VGMKKTLVFYKGRAPRGLKTKWVMHEYRLENDHSHRHTCKEEWVICRVFNKTGDRKN).

In a general manner, present at the boundaries between mersitems and araising primordia.

The protein localises to the nucleus. Functionally, transcription activator. Involved in molecular mechanisms regulating shoot apical meristem (SAM) formation during embryogenesis and organ separation. Required for axillary meristem initiation and separation of the meristem from the main stem. May act as an inhibitor of cell division. In Arabidopsis thaliana (Mouse-ear cress), this protein is Protein CUP-SHAPED COTYLEDON 3 (NAC031).